A 199-amino-acid polypeptide reads, in one-letter code: LIM domain-containing protein WLIM2b (199 aa).

2 LIM zinc-binding domains span residues 8 to 68 (QKCK…LFKE) and 106 to 166 (EKCA…LFKE).

In terms of assembly, interacts with F-actin. As to expression, expressed in roots, leaves, stems, flowers and siliques. Barely detected in pollen.

It is found in the cytoplasm. The protein resides in the cytoskeleton. Functionally, binds to actin filaments and promotes cross-linking into thick bundles. Has an actin-stabilizing activity. The actin regulatory activities are not regulated by pH and [Ca(2+)]. The protein is LIM domain-containing protein WLIM2b of Arabidopsis thaliana (Mouse-ear cress).